The sequence spans 626 residues: MSRSGAAAEKADSRQRPQMKVNEYKENQNIAYVSLRPAQTTVLIKTAKVYLAPFSLSNYQLDQLMCPKSLSEKNSNNEVACKKTKIKKTCRRIIPPKMKNTSSKAESTLQNSSSAVHTESNKLQPKRTADAMNLSVDVESSQDGDSDEDTTPSLDFSGLSPYERKRLKNISENADFFASLQLSESAARLREMIEKRQPPKSKRKKPKRENGIGCRRSMRLLKVDPSGVSLPAAPTPPTLVADETPLLPPGPLEMTSENQEDNNERFKGFLHTWAGMSKPSSKNTEKGLSSIKSYKANLNGMVISEDTVYKVTTGPIFSMALHPSETRTLVAVGAKFGQVGLCDLTQQPKEDGVYVFHPHSQPVSCLYFSPANPAHILSLSYDGTLRCGDFSRAIFEEVYRNERSSFSSFDFLAEDASTLIVGHWDGNMSLVDRRTPGTSYEKLTSSSMGKIRTVHVHPVHRQYFITAGLRDTHIYDARRLNSRRSQPLISLTEHTKSIASAYFSPLTGNRVVTTCADCNLRIFDSSCISSKIPLLTTIRHNTFTGRWLTRFQAMWDPKQEDCVIVGSMAHPRRVEIFHETGKRVHSFGGEYLVSVCSINAMHPTRYILAGGNSSGKIHVFMNEKSC.

Disordered stretches follow at residues 1-21 (MSRS…QMKV) and 95-159 (PPKM…FSGL). Polar residues predominate over residues 99–123 (KNTSSKAESTLQNSSSAVHTESNKL). Acidic residues predominate over residues 140 to 150 (SSQDGDSDEDT). WD repeat units lie at residues 311 to 352 (VTTG…KEDG), 358 to 400 (PHSQ…EVYR), 402 to 441 (ERSS…TSYE), 446 to 485 (SSMG…SRRS), 493 to 533 (EHTK…SKIP), 535 to 565 (LTTI…CVIV), and 590 to 626 (EYLV…EKSC).

This sequence belongs to the WD repeat DDB2/WDR76 family. As to quaternary structure, interacts with CUL4A and/or CUL4B.

Its function is as follows. Specifically binds 5-hydroxymethylcytosine (5hmC), suggesting that it acts as a specific reader of 5hmC. In Homo sapiens (Human), this protein is WD repeat-containing protein 76 (WDR76).